Consider the following 282-residue polypeptide: Probable endonuclease 4 (282 aa).

His-67, His-107, Glu-144, Asp-178, His-181, His-215, Asp-228, His-230, and Glu-260 together coordinate Zn(2+).

This sequence belongs to the AP endonuclease 2 family. Requires Zn(2+) as cofactor.

The enzyme catalyses Endonucleolytic cleavage to 5'-phosphooligonucleotide end-products.. Functionally, endonuclease IV plays a role in DNA repair. It cleaves phosphodiester bonds at apurinic or apyrimidinic (AP) sites, generating a 3'-hydroxyl group and a 5'-terminal sugar phosphate. This is Probable endonuclease 4 from Methanoculleus marisnigri (strain ATCC 35101 / DSM 1498 / JR1).